Here is a 175-residue protein sequence, read N- to C-terminus: Urease accessory protein UreE (175 aa).

The interval 151-175 (GGAYGGSPSHAHRHSHVHSHSHETP) is disordered. A compositionally biased stretch (basic residues) spans 160–169 (HAHRHSHVHS).

It belongs to the UreE family.

It localises to the cytoplasm. Functionally, involved in urease metallocenter assembly. Binds nickel. Probably functions as a nickel donor during metallocenter assembly. The polypeptide is Urease accessory protein UreE (Synechococcus sp. (strain WH7805)).